The sequence spans 474 residues: PRAME family member 17 (474 aa).

One copy of the LRR 1; degenerate repeat lies at 97–124 (RWKLQVLDLRDVDGNFWTIWSGARALSC). An LRR 2; degenerate repeat occupies 179–203 (HLCCNKVQNYSMPTSSFRNLLKRVY). The LRR 3; degenerate repeat unit spans residues 204–230 (PDSIQELEIKRKCSLNKTGKFAPYLSQ). One copy of the LRR 4; degenerate repeat lies at 231-265 (MSNLRKLFLAFGYDDELYVSGQQQFVPDLDCPFLC). LRR repeat units follow at residues 266-291 (LYYP…LRCL), 292-323 (KNPL…SQLK), 324-342 (ELHL…PLGA), 348-375 (AATL…ALSR), and 376-400 (CSQL…LLCH).

It belongs to the PRAME family.

The protein is PRAME family member 17 of Homo sapiens (Human).